The following is a 377-amino-acid chain: 4-hydroxy-3-methylbut-2-en-1-yl diphosphate synthase (flavodoxin) (377 aa).

The [4Fe-4S] cluster site is built by C275, C278, C310, and E317.

The protein belongs to the IspG family. It depends on [4Fe-4S] cluster as a cofactor.

The catalysed reaction is (2E)-4-hydroxy-3-methylbut-2-enyl diphosphate + oxidized [flavodoxin] + H2O + 2 H(+) = 2-C-methyl-D-erythritol 2,4-cyclic diphosphate + reduced [flavodoxin]. It functions in the pathway isoprenoid biosynthesis; isopentenyl diphosphate biosynthesis via DXP pathway; isopentenyl diphosphate from 1-deoxy-D-xylulose 5-phosphate: step 5/6. Its function is as follows. Converts 2C-methyl-D-erythritol 2,4-cyclodiphosphate (ME-2,4cPP) into 1-hydroxy-2-methyl-2-(E)-butenyl 4-diphosphate. This Ruegeria sp. (strain TM1040) (Silicibacter sp.) protein is 4-hydroxy-3-methylbut-2-en-1-yl diphosphate synthase (flavodoxin).